A 261-amino-acid polypeptide reads, in one-letter code: 3-hydroxyacyl-CoA dehydrogenase type-2 (261 aa).

An N-acetylalanine modification is found at A2. NAD(+) is bound by residues S20, L22, and D41. The residue at position 53 (K53) is an N6-acetyllysine; alternate. K53 carries the N6-succinyllysine; alternate modification. NAD(+) contacts are provided by D64 and V65. At K69 the chain carries N6-acetyllysine. NAD(+) is bound at residue C91. Residues K99 and K105 each carry the N6-acetyllysine modification. A substrate-binding site is contributed by S155. Residues Y168, K172, F201, and T203 each coordinate NAD(+). Y168 functions as the Proton acceptor in the catalytic mechanism. K212 carries the N6-acetyllysine; alternate modification. Position 212 is an N6-succinyllysine; alternate (K212).

The protein belongs to the short-chain dehydrogenases/reductases (SDR) family. In terms of assembly, homotetramer. Component of mitochondrial ribonuclease P, a complex composed of TRMT10C/MRPP1, HSD17B10/MRPP2 and PRORP/MRPP3. Interacts with TRMT10C/MRPP1; forming the MRPP1-MRPP2 subcomplex of the mitochondrial ribonuclease P complex.

Its subcellular location is the mitochondrion. The protein localises to the mitochondrion matrix. It is found in the mitochondrion nucleoid. The enzyme catalyses a (3S)-3-hydroxyacyl-CoA + NAD(+) = a 3-oxoacyl-CoA + NADH + H(+). The catalysed reaction is (2S,3S)-3-hydroxy-2-methylbutanoyl-CoA + NAD(+) = 2-methyl-3-oxobutanoyl-CoA + NADH + H(+). It carries out the reaction testosterone + NAD(+) = androst-4-ene-3,17-dione + NADH + H(+). It catalyses the reaction 5alpha-androstane-3alpha,17beta-diol + NAD(+) = 17beta-hydroxy-5alpha-androstan-3-one + NADH + H(+). The enzyme catalyses 17beta-estradiol + NAD(+) = estrone + NADH + H(+). The catalysed reaction is cholate + NAD(+) = 3alpha,12alpha-dihydroxy-7-oxo-5beta-cholanate + NADH + H(+). It carries out the reaction (3S)-3-hydroxybutanoyl-CoA + NAD(+) = acetoacetyl-CoA + NADH + H(+). It catalyses the reaction (3S)-hydroxyoctanoyl-CoA + NAD(+) = 3-oxooctanoyl-CoA + NADH + H(+). The enzyme catalyses (3S)-hydroxyhexadecanoyl-CoA + NAD(+) = 3-oxohexadecanoyl-CoA + NADH + H(+). The catalysed reaction is 17beta-hydroxy-5alpha-androstan-3-one + NAD(+) = 5alpha-androstan-3,17-dione + NADH + H(+). It carries out the reaction 5alpha-pregnan-20beta-ol-3-one + NAD(+) = 5alpha-pregnane-3,20-dione + NADH + H(+). It catalyses the reaction 3alpha-hydroxy-5alpha-pregnan-20-one + NAD(+) = 5alpha-pregnane-3,20-dione + NADH + H(+). The enzyme catalyses cortisone + NAD(+) = 17alpha-hydroxypregn-4-en-3,11,20-trione-21-al + NADH + H(+). The catalysed reaction is 11-dehydrocorticosterone + NAD(+) = pregn-4-ene-3,11,20,21-tetraone + NADH + H(+). It carries out the reaction cortisol + NAD(+) = 11beta,17alpha-dihydroxypregn-4-ene-3,20,21-trione + NADH + H(+). It catalyses the reaction chenodeoxycholate + NAD(+) = 7-oxolithocholate + NADH + H(+). The enzyme catalyses ursodeoxycholate + NAD(+) = 7-oxolithocholate + NADH + H(+). The catalysed reaction is 3beta,7beta-dihydroxy-5beta-cholan-24-oate + NAD(+) = 3beta-hydroxy-7-oxo-5beta-cholan-24-oate + NADH + H(+). It functions in the pathway amino-acid degradation; L-isoleucine degradation. It participates in lipid metabolism; fatty acid beta-oxidation. The protein operates within steroid metabolism. Its pathway is lipid metabolism; bile acid biosynthesis. In terms of biological role, mitochondrial dehydrogenase involved in pathways of fatty acid, branched-chain amino acid and steroid metabolism. Acts as (S)-3-hydroxyacyl-CoA dehydrogenase in mitochondrial fatty acid beta-oxidation, a major degradation pathway of fatty acids. Catalyzes the third step in the beta-oxidation cycle, namely the reversible conversion of (S)-3-hydroxyacyl-CoA to 3-ketoacyl-CoA. Preferentially accepts straight medium- and short-chain acyl-CoA substrates with highest efficiency for (3S)-hydroxybutanoyl-CoA. Acts as 3-hydroxy-2-methylbutyryl-CoA dehydrogenase in branched-chain amino acid catabolic pathway. Catalyzes the oxidation of 3-hydroxy-2-methylbutanoyl-CoA into 2-methyl-3-oxobutanoyl-CoA, a step in isoleucine degradation pathway. Has hydroxysteroid dehydrogenase activity toward steroid hormones and bile acids. Catalyzes the oxidation of 3alpha-, 17beta-, 20beta- and 21-hydroxysteroids and 7alpha- and 7beta-hydroxy bile acids. Oxidizes allopregnanolone/brexanolone at the 3alpha-hydroxyl group, which is known to be critical for the activation of gamma-aminobutyric acid receptors (GABAARs) chloride channel. Has phospholipase C-like activity toward cardiolipin and its oxidized species. Likely oxidizes the 2'-hydroxyl in the head group of cardiolipin to form a ketone intermediate that undergoes nucleophilic attack by water and fragments into diacylglycerol, dihydroxyacetone and orthophosphate. Has higher affinity for cardiolipin with oxidized fatty acids and may degrade these species during the oxidative stress response to protect cells from apoptosis. By interacting with intracellular amyloid-beta, it may contribute to the neuronal dysfunction associated with Alzheimer disease (AD). Essential for structural and functional integrity of mitochondria. Its function is as follows. In addition to mitochondrial dehydrogenase activity, moonlights as a component of mitochondrial ribonuclease P, a complex that cleaves tRNA molecules in their 5'-ends. Together with TRMT10C/MRPP1, forms a subcomplex of the mitochondrial ribonuclease P, named MRPP1-MRPP2 subcomplex, which displays functions that are independent of the ribonuclease P activity. The MRPP1-MRPP2 subcomplex catalyzes the formation of N(1)-methylguanine and N(1)-methyladenine at position 9 (m1G9 and m1A9, respectively) in tRNAs; HSD17B10/MRPP2 acting as a non-catalytic subunit. The MRPP1-MRPP2 subcomplex also acts as a tRNA maturation platform: following 5'-end cleavage by the mitochondrial ribonuclease P complex, the MRPP1-MRPP2 subcomplex enhances the efficiency of 3'-processing catalyzed by ELAC2, retains the tRNA product after ELAC2 processing and presents the nascent tRNA to the mitochondrial CCA tRNA nucleotidyltransferase TRNT1 enzyme. Associates with mitochondrial DNA complexes at the nucleoids to initiate RNA processing and ribosome assembly. This Bos taurus (Bovine) protein is 3-hydroxyacyl-CoA dehydrogenase type-2 (HSD17B10).